The primary structure comprises 47 residues: NADH dehydrogenase [ubiquinone] iron-sulfur protein 2 (47 aa).

The protein belongs to the complex I 49 kDa subunit family. As to quaternary structure, complex I is composed of about 45 different subunits. This is a component of the iron-sulfur (IP) fragment of the enzyme.

Its subcellular location is the mitochondrion inner membrane. The catalysed reaction is a ubiquinone + NADH + 5 H(+)(in) = a ubiquinol + NAD(+) + 4 H(+)(out). Functionally, core subunit of the mitochondrial membrane respiratory chain NADH dehydrogenase (Complex I) that is believed to belong to the minimal assembly required for catalysis. Complex I functions in the transfer of electrons from NADH to the respiratory chain. The immediate electron acceptor for the enzyme is believed to be ubiquinone. Component of the iron-sulfur (IP) fragment of the enzyme. The protein is NADH dehydrogenase [ubiquinone] iron-sulfur protein 2 (NAD7) of Solanum tuberosum (Potato).